The sequence spans 443 residues: Thymidine phosphorylase (443 aa).

This sequence belongs to the thymidine/pyrimidine-nucleoside phosphorylase family. Homodimer.

It catalyses the reaction thymidine + phosphate = 2-deoxy-alpha-D-ribose 1-phosphate + thymine. It functions in the pathway pyrimidine metabolism; dTMP biosynthesis via salvage pathway; dTMP from thymine: step 1/2. In terms of biological role, the enzymes which catalyze the reversible phosphorolysis of pyrimidine nucleosides are involved in the degradation of these compounds and in their utilization as carbon and energy sources, or in the rescue of pyrimidine bases for nucleotide synthesis. This Shewanella woodyi (strain ATCC 51908 / MS32) protein is Thymidine phosphorylase.